A 481-amino-acid chain; its full sequence is Glutamate--cysteine ligase (481 aa).

This sequence belongs to the glutamate--cysteine ligase type 1 family. Type 1 subfamily.

The enzyme catalyses L-cysteine + L-glutamate + ATP = gamma-L-glutamyl-L-cysteine + ADP + phosphate + H(+). It functions in the pathway sulfur metabolism; glutathione biosynthesis; glutathione from L-cysteine and L-glutamate: step 1/2. This Clostridium acetobutylicum (strain ATCC 824 / DSM 792 / JCM 1419 / IAM 19013 / LMG 5710 / NBRC 13948 / NRRL B-527 / VKM B-1787 / 2291 / W) protein is Glutamate--cysteine ligase.